The sequence spans 447 residues: Cobyrinate a,c-diamide synthase (447 aa).

In terms of domain architecture, GATase cobBQ-type spans 252-439 (KIAVAFDESF…AHQHCIGNPY (188 aa)). Cysteine 331 serves as the catalytic Nucleophile.

Belongs to the CobB/CbiA family. Mg(2+) is required as a cofactor.

It catalyses the reaction cob(II)yrinate + 2 L-glutamine + 2 ATP + 2 H2O = cob(II)yrinate a,c diamide + 2 L-glutamate + 2 ADP + 2 phosphate + 2 H(+). The catalysed reaction is Ni-sirohydrochlorin + 2 L-glutamine + 2 ATP + 2 H2O = Ni-sirohydrochlorin a,c-diamide + 2 L-glutamate + 2 ADP + 2 phosphate + 2 H(+). It functions in the pathway cofactor biosynthesis; adenosylcobalamin biosynthesis; cob(II)yrinate a,c-diamide from sirohydrochlorin (anaerobic route): step 10/10. Catalyzes the ATP-dependent amidation of the two carboxylate groups at positions a and c of cobyrinate, using either L-glutamine or ammonia as the nitrogen source. Involved in the biosynthesis of the unique nickel-containing tetrapyrrole coenzyme F430, the prosthetic group of methyl-coenzyme M reductase (MCR), which plays a key role in methanogenesis and anaerobic methane oxidation. Catalyzes the ATP-dependent amidation of the two carboxylate groups at positions a and c of Ni-sirohydrochlorin, using L-glutamine or ammonia as the nitrogen source. This is Cobyrinate a,c-diamide synthase from Methanococcus maripaludis (strain C7 / ATCC BAA-1331).